The sequence spans 577 residues: Arginine--tRNA ligase (577 aa).

Residues 122–132 (PNVAKEMHVGH) carry the 'HIGH' region motif.

Belongs to the class-I aminoacyl-tRNA synthetase family. As to quaternary structure, monomer.

It localises to the cytoplasm. It carries out the reaction tRNA(Arg) + L-arginine + ATP = L-arginyl-tRNA(Arg) + AMP + diphosphate. This chain is Arginine--tRNA ligase, found in Escherichia coli (strain K12 / MC4100 / BW2952).